A 1492-amino-acid chain; its full sequence is Cystic fibrosis transmembrane conductance regulator (1492 aa).

At 1 to 78 (MQRSPIEKAN…KLVNALRRCF (78 aa)) the chain is on the cytoplasmic side. The chain crosses the membrane as a helical span at residues 79-99 (FWRFLFYGILLYFVEFTKAVQ). An ABC transmembrane type-1 1 domain is found at 82 to 366 (FLFYGILLYF…SAIQTWYDSL (285 aa)). Residues 100 to 123 (PLCLGRIIASYNAKNTYEREIAYY) lie on the Extracellular side of the membrane. A helical transmembrane segment spans residues 124–147 (LALGLCLLFVVRTLFLHPAVFGLQ). Residues 148–196 (HLGMQMRIALFSLIYKKILKMSSRVLDKIDTGQLVSLLSNNLNKFDEGV) lie on the Cytoplasmic side of the membrane. The chain crosses the membrane as a helical span at residues 197–217 (AVAHFVWIAPVQVVLLMGLIW). At 218–223 (NELTEF) the chain is on the extracellular side. The chain crosses the membrane as a helical span at residues 224-244 (VFCGLGFLIMLALFQAWLGKK). Over 245–299 (MMQYRDKRAGKINERLAITSEIIDNIQSVKVYCWEDAMEKIIDDIRQVELKLTRK) the chain is Cytoplasmic. A helical transmembrane segment spans residues 300–320 (VAYCRYFSSSAFFFSGFFVVF). Residues 321 to 340 (LSVVPYAFIHTIKLRRIFTT) are Extracellular-facing. Residues 341-359 (ISYNIVLRMTVTRQFPSAI) form a helical membrane-spanning segment. At 360-867 (QTWYDSLGAI…YLRYVTTNRN (508 aa)) the chain is on the cytoplasmic side. ATP contacts are provided by residues Trp402, Ser435, 459 to 466 (GSTGSGKS), and Gln494. One can recognise an ABC transporter 1 domain in the interval 424–647 (NGDDGLFFSN…KPDFSSQLLG (224 aa)). The segment at 655–840 (SAERRNSILT…EEINEEDLKE (186 aa)) is disordered R region. The chain crosses the membrane as a helical span at residues 868–888 (LVFVLILCLVIFLAEVAASLA). The ABC transmembrane type-1 2 domain maps to 868–1169 (LVFVLILCLV…AVNSSIDVDG (302 aa)). Residues 889-932 (GLWIISGLAINTGSQTNDTSTDLSHLSVFSKFITNGSHYYIFYI) lie on the Extracellular side of the membrane. Asn905 and Asn923 each carry an N-linked (GlcNAc...) asparagine glycan. The chain crosses the membrane as a discontinuously helical span at residues 933–953 (YVGLADSFLALGVIRGLPLVH). At 954–1004 (TLVTVSKDLHKQMLHSVLQGPMTAFNKMKAGRILNRFIKDTAIIDDMLPLT) the chain is on the cytoplasmic side. Residues 1005 to 1025 (VFDFVQLILIVVGAICVVSVL) traverse the membrane as a helical segment. Residues 1026 to 1027 (QP) lie on the Extracellular side of the membrane. A helical transmembrane segment spans residues 1028–1048 (YTLLAAIPVAVIFIMLRAYFL). Residues 1049-1109 (RTSQQLKQLE…TANWFLYLST (61 aa)) are Cytoplasmic-facing. A helical transmembrane segment spans residues 1110–1130 (LRWFQMRIDIVFVLFFIAVTF). Over 1131 to 1144 (IAIATHDVGEGQVG) the chain is Extracellular. A helical membrane pass occupies residues 1145–1165 (IILTLAMNITSTLQWAVNSSI). The Cytoplasmic portion of the chain corresponds to 1166-1492 (DVDGLMRSVS…AEEDLQETRL (327 aa)). Residues 1220–1453 (MMVNNLTAKY…ASLFKQVFGH (234 aa)) form the ABC transporter 2 domain. ATP-binding positions include Tyr1229 and 1254–1261 (GRTGAGKS). Residues 1465 to 1474 (RNSSKRKTRP) show a composition bias toward basic residues. Residues 1465–1492 (RNSSKRKTRPKISALQEEAEEDLQETRL) are disordered. Acidic residues predominate over residues 1481–1492 (EEAEEDLQETRL). The PDZ-binding signature appears at 1483-1485 (AEE).

Belongs to the ABC transporter superfamily. ABCC family. CFTR transporter (TC 3.A.1.202) subfamily. As to quaternary structure, monomer; does not require oligomerization for channel activity. May form oligomers in the membrane. Phosphorylated; cAMP treatment promotes phosphorylation and activates the channel. Dephosphorylation decreases the ATPase activity (in vitro). Phosphorylation at PKA sites activates the channel. Phosphorylation at PKC sites enhances the response to phosphorylation by PKA. In terms of tissue distribution, expressed in the rectal gland (at protein level).

The protein resides in the apical cell membrane. Its subcellular location is the early endosome membrane. It localises to the cell membrane. The protein localises to the recycling endosome membrane. It is found in the endoplasmic reticulum membrane. It catalyses the reaction ATP + H2O + closed Cl(-) channel = ADP + phosphate + open Cl(-) channel.. It carries out the reaction chloride(in) = chloride(out). The enzyme catalyses hydrogencarbonate(in) = hydrogencarbonate(out). The catalysed reaction is ATP + H2O = ADP + phosphate + H(+). In terms of biological role, epithelial ion channel that plays an important role in the regulation of epithelial ion and water transport and fluid homeostasis. Mediates the transport of chloride ions across the cell membrane. Possesses an intrinsic ATPase activity and utilizes ATP to gate its channel; the passive flow of anions through the channel is gated by cycles of ATP binding and hydrolysis by the ATP-binding domains. The ion channel is also permeable to HCO(3)(-); selectivity depends on the extracellular chloride concentration. Exerts its function also by modulating the activity of other ion channels and transporters. Contributes to the regulation of the pH and the ion content of the epithelial fluid layer. This chain is Cystic fibrosis transmembrane conductance regulator, found in Squalus acanthias (Spiny dogfish).